A 78-amino-acid polypeptide reads, in one-letter code: CDC42 small effector protein 1 (78 aa).

S-palmitoyl cysteine attachment occurs at residues Cys-10 and Cys-11. One can recognise a CRIB domain in the interval 30–43 (IGEPMNFVHLTHIG).

This sequence belongs to the CDC42SE/SPEC family.

Its subcellular location is the cytoplasm. It localises to the cytoskeleton. The protein resides in the cell membrane. Probably involved in the organization of the actin cytoskeleton by acting downstream of CDC42, inducing actin filament assembly. This is CDC42 small effector protein 1 (CDC42SE1) from Gallus gallus (Chicken).